Here is a 313-residue protein sequence, read N- to C-terminus: Homoserine O-acetyltransferase (313 aa).

Cys142 (acyl-thioester intermediate) is an active-site residue. Positions 163 and 191 each coordinate substrate. The Proton acceptor role is filled by His234. Residue Glu236 is part of the active site. Arg248 lines the substrate pocket.

The protein belongs to the MetA family.

The protein resides in the cytoplasm. The enzyme catalyses L-homoserine + acetyl-CoA = O-acetyl-L-homoserine + CoA. It functions in the pathway amino-acid biosynthesis; L-methionine biosynthesis via de novo pathway; O-acetyl-L-homoserine from L-homoserine: step 1/1. Functionally, transfers an acetyl group from acetyl-CoA to L-homoserine, forming acetyl-L-homoserine. This is Homoserine O-acetyltransferase from Streptococcus gordonii (strain Challis / ATCC 35105 / BCRC 15272 / CH1 / DL1 / V288).